Consider the following 110-residue polypeptide: Ig kappa chain V region 2717 (110 aa).

Residues 1–23 (VEVLTQTPSPVSAAVGGTVTISC) form a framework-1 region. The tract at residues 24 to 36 (QSTKSIYBBBYLA) is complementarity-determining-1. The tract at residues 37 to 51 (WYQZKPGQPPKALIY) is framework-2. Residues 52 to 58 (TASSLAS) form a complementarity-determining-2 region. Residues 59 to 90 (GVPSRFTGSGSGTZFTLTLSDVZCDDAATYYC) form a framework-3 region. The interval 91–99 (GGADYTGYS) is complementarity-determining-3. The interval 100–109 (FGGGTEVVVK) is framework-4.

The protein is Ig kappa chain V region 2717 of Oryctolagus cuniculus (Rabbit).